Consider the following 455-residue polypeptide: Ribosome biogenesis protein NOP53 (455 aa).

Over residues 1-15 (MAPTNLTKKPSQYKQ) the composition is skewed to polar residues. Positions 1 to 25 (MAPTNLTKKPSQYKQSSRKGKKAWR) are disordered. Over residues 16-25 (SSRKGKKAWR) the composition is skewed to basic residues. Position 31 is a phosphoserine (Ser31). Residues 264–333 (HLMETLDDNE…RNKAKRHEEK (70 aa)) are disordered. Residues 268-294 (TLDDNEEEESSSNEEEEEEEEENENEN) are compositionally biased toward acidic residues. A compositionally biased stretch (basic residues) spans 314–328 (VKNKKKTKYQRNKAK).

This sequence belongs to the NOP53 family. Interacts with CBF5, FPR3, FPR4, NOP2, PIH1, RRN3, RRP6 and PAP2. Interacts with pre-60S ribosomal particles.

Its subcellular location is the nucleus. It localises to the nucleolus. It is found in the nucleoplasm. In terms of biological role, late-acting factor in the nuclear maturation of 60S ribosomal subunits, which is required for normal acquisition of export competence. Required for the export of the large subunit. Acts to stimulate the RNase activity of the exosome complex, and may recruit the exosome to 7S pre-rRNA for processing. Associates with numerous RNAs including the 27S and 7S pre-rRNAs and the box H/ACA snoRNA snR37. Also interacts (via N-terminal region) with the mature 25S rRNA and the mature 5.8S rRNA. The protein is Ribosome biogenesis protein NOP53 of Saccharomyces cerevisiae (strain ATCC 204508 / S288c) (Baker's yeast).